A 545-amino-acid chain; its full sequence is Putative serine/threonine-protein kinase L673 (545 aa).

One can recognise a Cyclin N-terminal domain in the interval Arg13–Lys125. Residues Ile264–Phe543 enclose the Protein kinase domain. ATP contacts are provided by residues Leu270–Val278 and Lys291. Catalysis depends on Asp384, which acts as the Proton acceptor.

This sequence belongs to the protein kinase superfamily. Ser/Thr protein kinase family.

It catalyses the reaction L-seryl-[protein] + ATP = O-phospho-L-seryl-[protein] + ADP + H(+). The catalysed reaction is L-threonyl-[protein] + ATP = O-phospho-L-threonyl-[protein] + ADP + H(+). The sequence is that of Putative serine/threonine-protein kinase L673 from Acanthamoeba polyphaga (Amoeba).